Here is a 306-residue protein sequence, read N- to C-terminus: Agmatinase (306 aa).

Positions 126, 149, 151, 153, 230, and 232 each coordinate Mn(2+).

Belongs to the arginase family. Agmatinase subfamily. It depends on Mn(2+) as a cofactor.

It carries out the reaction agmatine + H2O = urea + putrescine. Its pathway is amine and polyamine biosynthesis; putrescine biosynthesis via agmatine pathway; putrescine from agmatine: step 1/1. Its function is as follows. Catalyzes the formation of putrescine from agmatine. This chain is Agmatinase, found in Shigella sonnei (strain Ss046).